A 274-amino-acid chain; its full sequence is Diaminopimelate epimerase (274 aa).

3 residues coordinate substrate: Asn-11, Gln-44, and Asn-64. Cys-73 serves as the catalytic Proton donor. Residues 74–75 (GN), Asn-157, Asn-190, and 208–209 (ER) each bind substrate. Cys-217 serves as the catalytic Proton acceptor. Substrate is bound at residue 218 to 219 (GS).

This sequence belongs to the diaminopimelate epimerase family. Homodimer.

Its subcellular location is the cytoplasm. It catalyses the reaction (2S,6S)-2,6-diaminopimelate = meso-2,6-diaminopimelate. Its pathway is amino-acid biosynthesis; L-lysine biosynthesis via DAP pathway; DL-2,6-diaminopimelate from LL-2,6-diaminopimelate: step 1/1. Its function is as follows. Catalyzes the stereoinversion of LL-2,6-diaminopimelate (L,L-DAP) to meso-diaminopimelate (meso-DAP), a precursor of L-lysine and an essential component of the bacterial peptidoglycan. This chain is Diaminopimelate epimerase, found in Escherichia fergusonii (strain ATCC 35469 / DSM 13698 / CCUG 18766 / IAM 14443 / JCM 21226 / LMG 7866 / NBRC 102419 / NCTC 12128 / CDC 0568-73).